The primary structure comprises 617 residues: Dihydroxy-acid dehydratase (617 aa).

Asp81 lines the Mg(2+) pocket. A [2Fe-2S] cluster-binding site is contributed by Cys122. Asp123 and Lys124 together coordinate Mg(2+). Lys124 carries the N6-carboxylysine modification. Residue Cys195 participates in [2Fe-2S] cluster binding. Residue Glu492 coordinates Mg(2+). The active-site Proton acceptor is Ser518.

This sequence belongs to the IlvD/Edd family. As to quaternary structure, homodimer. [2Fe-2S] cluster serves as cofactor. Requires Mg(2+) as cofactor.

It carries out the reaction (2R)-2,3-dihydroxy-3-methylbutanoate = 3-methyl-2-oxobutanoate + H2O. The enzyme catalyses (2R,3R)-2,3-dihydroxy-3-methylpentanoate = (S)-3-methyl-2-oxopentanoate + H2O. The protein operates within amino-acid biosynthesis; L-isoleucine biosynthesis; L-isoleucine from 2-oxobutanoate: step 3/4. It functions in the pathway amino-acid biosynthesis; L-valine biosynthesis; L-valine from pyruvate: step 3/4. Functionally, functions in the biosynthesis of branched-chain amino acids. Catalyzes the dehydration of (2R,3R)-2,3-dihydroxy-3-methylpentanoate (2,3-dihydroxy-3-methylvalerate) into 2-oxo-3-methylpentanoate (2-oxo-3-methylvalerate) and of (2R)-2,3-dihydroxy-3-methylbutanoate (2,3-dihydroxyisovalerate) into 2-oxo-3-methylbutanoate (2-oxoisovalerate), the penultimate precursor to L-isoleucine and L-valine, respectively. The polypeptide is Dihydroxy-acid dehydratase (Azorhizobium caulinodans (strain ATCC 43989 / DSM 5975 / JCM 20966 / LMG 6465 / NBRC 14845 / NCIMB 13405 / ORS 571)).